The primary structure comprises 144 residues: Large ribosomal subunit protein uL15 (144 aa).

Residues 1 to 57 form a disordered region; sequence MRLNTLSPAAGSKHAPKRVGRGIGSGLGKTGGRGHKGQKSRSGGKVRPGFEGGQMPL. Residues 21 to 31 are compositionally biased toward gly residues; it reads RGIGSGLGKTG. Residues 32–44 show a composition bias toward basic residues; it reads GRGHKGQKSRSGG.

Belongs to the universal ribosomal protein uL15 family. Part of the 50S ribosomal subunit.

Its function is as follows. Binds to the 23S rRNA. This Vibrio vulnificus (strain CMCP6) protein is Large ribosomal subunit protein uL15.